An 88-amino-acid chain; its full sequence is Small ribosomal subunit protein uS15 (88 aa).

Belongs to the universal ribosomal protein uS15 family. In terms of assembly, part of the 30S ribosomal subunit. Forms a bridge to the 50S subunit in the 70S ribosome, contacting the 23S rRNA.

Its function is as follows. One of the primary rRNA binding proteins, it binds directly to 16S rRNA where it helps nucleate assembly of the platform of the 30S subunit by binding and bridging several RNA helices of the 16S rRNA. In terms of biological role, forms an intersubunit bridge (bridge B4) with the 23S rRNA of the 50S subunit in the ribosome. This Geobacter sp. (strain M21) protein is Small ribosomal subunit protein uS15.